Reading from the N-terminus, the 487-residue chain is Citrate/succinate antiporter (487 aa).

Helical transmembrane passes span 11–31 (LLAP…DGMP), 60–80 (FIAV…AKEL), 95–115 (GLAG…IFAL), 138–158 (TLTL…FTPS), 190–210 (IGGY…SMFV), 214–234 (APNV…ISWL), 237–257 (FLCF…LSYV), 288–308 (WTLI…SEVI), 309–329 (NATA…VVPW), 345–365 (LATL…DWFA), 379–399 (ATVI…ASLS), 401–421 (HTAT…GVPM), 424–444 (LCIL…YATG), and 463–483 (LGAI…WPIL).

Belongs to the SLC13A/DASS transporter (TC 2.A.47) family. DIT1 subfamily.

Its subcellular location is the cell inner membrane. In terms of biological role, responsible for the uptake of citrate in exchange to the efflux of succinate. Has a relatively broad specificity for C(4)-dicarboxylates and tricarboxylates. The protein is Citrate/succinate antiporter (citT) of Escherichia coli O157:H7.